Reading from the N-terminus, the 478-residue chain is Solute carrier family 49 member 4 (478 aa).

The tract at residues 1–27 is disordered; sequence MGSGWSSEEEERQPLLGPGLGPAPGAT. The Cytoplasmic portion of the chain corresponds to 1–51; the sequence is MGSGWSSEEEERQPLLGPGLGPAPGATRRGREAAAVLPAAGPSPGRVYGRR. Residues 15–16 carry the Di-leucine motif; mediates lysosomal localization motif; sequence LL. The chain crosses the membrane as a helical span at residues 52-72; it reads WLVLLLFSLLAFAQGLVWNTW. Residues 73 to 89 are Lumenal-facing; that stretch reads GPIQNSARQAYSFTGWD. A helical membrane pass occupies residues 90–110; that stretch reads IALLVLWGPIGFLPCFAFMWL. Residues 111–117 lie on the Cytoplasmic side of the membrane; the sequence is LDKRGLR. The chain crosses the membrane as a helical span at residues 118-138; that stretch reads ITVLLTSFLMVLGTGLRCIPV. Residues 139 to 152 lie on the Lumenal side of the membrane; that stretch reads SDLTLKKRLIHGGQ. A helical transmembrane segment spans residues 153-173; sequence ILNGLAGPTVMNAAPFLSTTW. Over 174–184 the chain is Cytoplasmic; it reads FSADERATATA. A helical membrane pass occupies residues 185–205; it reads IASMLSYLGGACAFLVGPLVV. Residues 206–229 are Lumenal-facing; sequence PAPNGTAPLLTAESSRDHIKDRIE. N209 carries an N-linked (GlcNAc...) asparagine glycan. Residues 230-250 traverse the membrane as a helical segment; it reads TVLYAEFGVVCLIFSATLAYF. Residues 251–281 lie on the Cytoplasmic side of the membrane; sequence PPRPPLPPSVAAASQRLSYRRSFCRLLSNLR. Residues 282–302 form a helical membrane-spanning segment; the sequence is FLMIALAYAIPLGVFAGWSGV. Residues 303 to 314 lie on the Lumenal side of the membrane; sequence LDLILTPVHVSQ. The helical transmembrane segment at 315–335 threads the bilayer; it reads VDAGWIGFWSIVGGCVVGIAM. Residues 336-347 are Cytoplasmic-facing; sequence ARFADFIRGMLK. The chain crosses the membrane as a helical span at residues 348-368; that stretch reads LILLLLFSGATLSSTWFTLTC. Over 369–384 the chain is Lumenal; it reads LNSVTHLPLTTVTLYA. Residues 385–405 form a helical membrane-spanning segment; it reads SCILLGVFLNSSVPIFFELFV. The Cytoplasmic segment spans residues 406–414; that stretch reads ETVYPVPEG. The chain crosses the membrane as a helical span at residues 415 to 435; the sequence is ITCGVVTFLSNMFMGVLLFFV. At 436–442 the chain is on the lumenal side; sequence TFYHTEL. Residues 443 to 463 traverse the membrane as a helical segment; it reads SWFNWCLPGSCLLSLLLILCF. Topologically, residues 464-478 are cytoplasmic; it reads RESYDRLYLDVVVSV.

This sequence belongs to the major facilitator superfamily. In terms of processing, cleaved in lysosomes by cathepsin L between Leu-214 and Ala-261, generating a N-glycosylated N-terminal and a non-glycosylated C-terminal fragment.

The protein resides in the lysosome membrane. The enzyme catalyses pyridoxine(out) + n H(+)(out) = pyridoxine(in) + n H(+)(in). Its function is as follows. Mediates H(+)-dependent pyridoxine transport. The protein is Solute carrier family 49 member 4 (Slc49a4) of Rattus norvegicus (Rat).